The chain runs to 214 residues: Peroxiredoxin 2 (214 aa).

Residues 1–157 (MKLYQKFPET…LLRITKAMIV (157 aa)) form the Thioredoxin domain. Cys-45 acts as the Cysteine sulfenic acid (-SOH) intermediate in catalysis. Substrate is bound at residue Arg-120.

The protein belongs to the peroxiredoxin family. Prx6 subfamily. As to quaternary structure, homodecamer. Pentamer of dimers that assemble into a ring structure.

The protein localises to the cytoplasm. The catalysed reaction is a hydroperoxide + [thioredoxin]-dithiol = an alcohol + [thioredoxin]-disulfide + H2O. Thiol-specific peroxidase that catalyzes the reduction of hydrogen peroxide and organic hydroperoxides to water and alcohols, respectively. Plays a role in cell protection against oxidative stress by detoxifying peroxides. The chain is Peroxiredoxin 2 from Sulfuracidifex metallicus (Sulfolobus metallicus).